The chain runs to 239 residues: Aspartate/glutamate leucyltransferase (239 aa).

It belongs to the R-transferase family. Bpt subfamily.

It is found in the cytoplasm. The enzyme catalyses N-terminal L-glutamyl-[protein] + L-leucyl-tRNA(Leu) = N-terminal L-leucyl-L-glutamyl-[protein] + tRNA(Leu) + H(+). The catalysed reaction is N-terminal L-aspartyl-[protein] + L-leucyl-tRNA(Leu) = N-terminal L-leucyl-L-aspartyl-[protein] + tRNA(Leu) + H(+). Functionally, functions in the N-end rule pathway of protein degradation where it conjugates Leu from its aminoacyl-tRNA to the N-termini of proteins containing an N-terminal aspartate or glutamate. The protein is Aspartate/glutamate leucyltransferase of Campylobacter jejuni (strain RM1221).